Consider the following 657-residue polypeptide: Probable alpha-galactosidase D (657 aa).

A signal peptide spans 1–16 (MLPKIFYLSLLPAALG). Asn47 and Asn91 each carry an N-linked (GlcNAc...) asparagine glycan. Cys124 and Cys157 are joined by a disulfide. Asp155 serves as the catalytic Nucleophile. N-linked (GlcNAc...) asparagine glycans are attached at residues Asn182 and Asn191. Residue 200–204 (EWGID) participates in substrate binding. Asp222 serves as the catalytic Proton donor. N-linked (GlcNAc...) asparagine glycosylation is found at Asn291, Asn438, Asn460, Asn505, Asn539, Asn543, and Asn582.

Belongs to the glycosyl hydrolase 27 family.

It localises to the secreted. It catalyses the reaction Hydrolysis of terminal, non-reducing alpha-D-galactose residues in alpha-D-galactosides, including galactose oligosaccharides, galactomannans and galactolipids.. Its function is as follows. Hydrolyzes a variety of simple alpha-D-galactoside as well as more complex molecules such as oligosaccharides and polysaccharides. The polypeptide is Probable alpha-galactosidase D (aglD) (Aspergillus oryzae (strain ATCC 42149 / RIB 40) (Yellow koji mold)).